We begin with the raw amino-acid sequence, 176 residues long: Pro-glucagon (176 aa).

The first 20 residues, 1–20, serve as a signal peptide directing secretion; the sequence is MKSLYFVAGLLVMLAQGSWQ. Residues 25–35 are compositionally biased toward polar residues; sequence NTEEKSSSFPA. A disordered region spans residues 25–59; that stretch reads NTEEKSSSFPAPQTDPLGDPDQISEDKRHSQGTFT. Residue serine 54 is modified to Phosphoserine. Positions 84 to 89 are excised as a propeptide; it reads NKNNIA. Phosphoserine is present on residues serine 105 and serine 108. Arginine 127 is subject to Arginine amide. Positions 131-145 are excised as a propeptide; it reads DFPEEVNIVEELRRR. A phosphoserine mark is found at serine 150 and serine 152.

It belongs to the glucagon family. Post-translationally, proglucagon is post-translationally processed in a tissue-specific manner in pancreatic A cells and intestinal L cells. In pancreatic A cells, the major bioactive hormone is glucagon cleaved by PCSK2/PC2. In the intestinal L cells PCSK1/PC1 liberates GLP-1, GLP-2, glicentin and oxyntomodulin. GLP-1 is further N-terminally truncated by post-translational processing in the intestinal L cells resulting in GLP-1(7-37) GLP-1-(7-36)amide. The C-terminal amidation is neither important for the metabolism of GLP-1 nor for its effects on the endocrine pancreas. In terms of tissue distribution, glucagon is secreted in the A cells of the islets of Langerhans. GLP-1, GLP-2, oxyntomodulin and glicentin are secreted from enteroendocrine cells throughout the gastrointestinal tract. GLP-1 and GLP-2 are also secreted in selected neurons in the brain.

The protein resides in the secreted. Its function is as follows. Plays a key role in glucose metabolism and homeostasis. Regulates blood glucose by increasing gluconeogenesis and decreasing glycolysis. A counterregulatory hormone of insulin, raises plasma glucose levels in response to insulin-induced hypoglycemia. Plays an important role in initiating and maintaining hyperglycemic conditions in diabetes. Potent stimulator of glucose-dependent insulin release. Also stimulates insulin release in response to IL6. Plays important roles on gastric motility and the suppression of plasma glucagon levels. May be involved in the suppression of satiety and stimulation of glucose disposal in peripheral tissues, independent of the actions of insulin. Has growth-promoting activities on intestinal epithelium. May also regulate the hypothalamic pituitary axis (HPA) via effects on LH, TSH, CRH, oxytocin, and vasopressin secretion. Increases islet mass through stimulation of islet neogenesis and pancreatic beta cell proliferation. Inhibits beta cell apoptosis. Functionally, stimulates intestinal growth and up-regulates villus height in the small intestine, concomitant with increased crypt cell proliferation and decreased enterocyte apoptosis. The gastrointestinal tract, from the stomach to the colon is the principal target for GLP-2 action. Plays a key role in nutrient homeostasis, enhancing nutrient assimilation through enhanced gastrointestinal function, as well as increasing nutrient disposal. Stimulates intestinal glucose transport and decreases mucosal permeability. In terms of biological role, significantly reduces food intake. Inhibits gastric emptying in humans. Suppression of gastric emptying may lead to increased gastric distension, which may contribute to satiety by causing a sensation of fullness. Its function is as follows. May modulate gastric acid secretion and the gastro-pyloro-duodenal activity. May play an important role in intestinal mucosal growth in the early period of life. In Ovis aries (Sheep), this protein is Pro-glucagon (GCG).